Consider the following 160-residue polypeptide: Major strawberry allergen Fra a 1.04 (160 aa).

Belongs to the BetVI family. Phosphorylated in vivo. Phosphorylation prevents its activity as ribonuclease. Highly expressed in roots. Expressed a low levels in ripe red fruits.

In terms of biological role, possesses ribonuclease activity in vitro. The sequence is that of Major strawberry allergen Fra a 1.04 from Fragaria ananassa (Strawberry).